A 241-amino-acid chain; its full sequence is Beta-casein (241 aa).

The N-terminal stretch at 1–15 (MKILILACLVALALA) is a signal peptide. The tract at residues 21–45 (LNVSSETVESLSSNEPDSSSEESIT) is disordered. The residue at position 24 (Ser24) is a Phosphoserine; in form 4-P, form 5-P, form 6-P and form 7-P. Position 25 is a phosphoserine; in form 7-P (Ser25). Thr27 is modified (phosphothreonine; in form 6-P and form 7-P). 2 positions are modified to phosphoserine: Ser30 and Ser32. Phosphoserine; in form 5-P, form 6-P and form 7-P is present on Ser33. 3 positions are modified to phosphoserine; in form 4-P, form 5-P, form 6-P and form 7-P: Ser38, Ser39, and Ser40. Residue Asn150 is modified to Deamidated asparagine.

It belongs to the beta-casein family. Post-translationally, there are at least five different forms found in milk, with varying degrees of phosphorylation. These include form 3-P which is phosphorylated at three sites that have not been determined, this form is present in very low amounts, form 4-P which is phosphorylated at four sites, form 5-P which is phosphorylated at five sites, form 6-P which is phosphorylated at six sites, and form 7-P which is phosphorylated at seven sites. Spontaneous deamidation of Asn-150 produces aspartate or isoaspartate. Mammary gland specific. Secreted in milk.

It is found in the secreted. In terms of biological role, important role in determination of the surface properties of the casein micelles. In Equus caballus (Horse), this protein is Beta-casein.